The following is a 63-amino-acid chain: Small ribosomal subunit protein eS17 (63 aa).

The protein belongs to the eukaryotic ribosomal protein eS17 family.

The protein is Small ribosomal subunit protein eS17 of Methanosphaerula palustris (strain ATCC BAA-1556 / DSM 19958 / E1-9c).